A 280-amino-acid chain; its full sequence is Capsid fiber protein (280 aa).

The protein belongs to the phi29likevirus major capsid fiber protein family. In terms of assembly, homotrimer. Forms a super helix coiled coil in the homotrimer.

The protein resides in the virion. Protein that forms the 55 capsid fibers. These fibers are not always present and may have been lost in some lab strains. They may enhance the attachment of the virions onto the host cell wall. This Bacillus subtilis (Bacteriophage PZA) protein is Capsid fiber protein (8.5).